A 309-amino-acid chain; its full sequence is NADH-cytochrome b5 reductase 1 (309 aa).

Residues 30–50 (FVPYAVALTAILAGLKLFTGG) traverse the membrane as a helical segment. The FAD-binding FR-type domain occupies 60-165 (TEFQEFVLKE…RGPKGAMVYT (106 aa)). FAD is bound by residues 145–160 (TTLK…GPKG) and 171–208 (HIGM…KLDL).

This sequence belongs to the flavoprotein pyridine nucleotide cytochrome reductase family. In terms of assembly, monomer. Component of the 2-(3-amino-3-carboxypropyl)histidine synthase complex composed of dph1, dph2, dph3 and a NADH-dependent reductase, predominantly cbr1. The cofactor is FAD.

The protein resides in the mitochondrion outer membrane. It carries out the reaction 2 Fe(III)-[cytochrome b5] + NADH = 2 Fe(II)-[cytochrome b5] + NAD(+) + H(+). The catalysed reaction is 2 Fe(3+)-[Dph3] + NADH = 2 Fe(2+)-[Dph3] + NAD(+) + H(+). Its pathway is protein modification; peptidyl-diphthamide biosynthesis. NADH-dependent reductase for dph3 and cytochrome b5. Required for the first step of diphthamide biosynthesis, a post-translational modification of histidine which occurs in elongation factor 2. Dph1 and dph2 transfer a 3-amino-3-carboxypropyl (ACP) group from S-adenosyl-L-methionine (SAM) to a histidine residue, the reaction is assisted by a reduction system comprising dph3 and a NADH-dependent reductase, predominantly cbr1. By reducing dph3, also involved in the formation of the tRNA wobble base modification mcm5s 2U (5-methoxycarbonylmethyl-2-thiouridine), mediated by the elongator complex. The cytochrome b5/NADH cytochrome b5 reductase electron transfer system supports the catalytic activity of several sterol biosynthetic enzymes. The polypeptide is NADH-cytochrome b5 reductase 1 (cbr1) (Neosartorya fischeri (strain ATCC 1020 / DSM 3700 / CBS 544.65 / FGSC A1164 / JCM 1740 / NRRL 181 / WB 181) (Aspergillus fischerianus)).